Reading from the N-terminus, the 264-residue chain is MADSFSLNDALAGSGNPNPQGYPGAWGNQPGAGGYPGAAYPGAYPGQAPPGAYPGQAPPGAYPGQAPPSAYPGPTAPGAYPGPTAPGAYPGQPAPGAFPGQPGAPGAYPQCSGGYPAAGPYGVPAGPLTVPYDLPLPGGVMPRMLITIMGTVKPNANRIVLDFRRGNDVAFHFNPRFNENNRRVIVCNTKQDNNWGKEERQSAFPFESGKPFKIQVLVEADHFKVAVNDAHLLQYNHRMKNLREISQLGISGDITLTSANHAMI.

The disordered stretch occupies residues 1-105 (MADSFSLNDA…GAFPGQPGAP (105 aa)). Ala-2 bears the N-acetylalanine mark. Ser-6 is modified (phosphoserine; by CK1). Repeat copies occupy residues 35-43 (YPGAAYPGA), 44-52 (YPGQAPPGA), 53-61 (YPGQAPPGA), 62-70 (YPGQAPPSA), 71-79 (YPGPTAPGA), 80-88 (YPGPTAPGA), 89-97 (YPGQPAPGA), and 98-107 (FPGQPGAPGA). The segment at 35–114 (YPGAAYPGAY…PGAYPQCSGG (80 aa)) is 9 X 9 AA tandem repeats of Y-P-G-X(3)-P-[GS]-A. Over residues 37-46 (GAAYPGAYPG) the composition is skewed to low complexity. Pro residues predominate over residues 47-75 (QAPPGAYPGQAPPGAYPGQAPPSAYPGPT). Low complexity predominate over residues 76–105 (APGAYPGPTAPGAYPGQPAPGAFPGQPGAP). Residues 108-114 (YPQCSGG) form a 9; truncated repeat. The Galectin domain maps to 132-262 (YDLPLPGGVM…DITLTSANHA (131 aa)). Position 195–201 (195–201 (WGKEERQ)) interacts with a beta-D-galactoside. Position 202 is a phosphoserine (Ser-202). The short motif at 240-255 (KNLREISQLGISGDIT) is the Nuclear export signal element.

As to quaternary structure, probably forms homo- or heterodimers. Interacts with DMBT1. Interacts with CD6 and ALCAM. Forms a complex with the ITGA3, ITGB1 and CSPG4. Interacts with LGALS3BP, LYPD3, ZFTRAF1 and UACA. Interacts with TRIM16; this interaction mediates autophagy of damage endomembranes. Interacts with and inhibits by binding NCR3/NKp30. As to expression, the highest levels are found in activated macrophages.

It is found in the cytoplasm. The protein localises to the nucleus. It localises to the secreted. Its function is as follows. Galactose-specific lectin which binds IgE. May mediate with the alpha-3, beta-1 integrin the stimulation by CSPG4 of endothelial cells migration. Together with DMBT1, required for terminal differentiation of columnar epithelial cells during early embryogenesis. In the nucleus: acts as a pre-mRNA splicing factor. Involved in acute inflammatory responses including neutrophil activation and adhesion, chemoattraction of monocytes macrophages, opsonization of apoptotic neutrophils, and activation of mast cells. Together with TRIM16, coordinates the recognition of membrane damage with mobilization of the core autophagy regulators ATG16L1 and BECN1 in response to damaged endomembranes. When secreted, interacts with NK cell-activating receptor NCR3/NKp30 acting as an inhibitory ligand which antagonizes NK cell attack. This chain is Galectin-3 (Lgals3), found in Mus musculus (Mouse).